The sequence spans 1028 residues: Isoleucine--tRNA ligase (1028 aa).

The short motif at 51–61 (PTANGRPHIGH) is the 'HIGH' region element. The 'KMSKS' region motif lies at 591–595 (KMSKS). K594 serves as a coordination point for ATP.

It belongs to the class-I aminoacyl-tRNA synthetase family. IleS type 2 subfamily. In terms of assembly, monomer. Zn(2+) serves as cofactor.

It localises to the cytoplasm. The enzyme catalyses tRNA(Ile) + L-isoleucine + ATP = L-isoleucyl-tRNA(Ile) + AMP + diphosphate. Its function is as follows. Catalyzes the attachment of isoleucine to tRNA(Ile). As IleRS can inadvertently accommodate and process structurally similar amino acids such as valine, to avoid such errors it has two additional distinct tRNA(Ile)-dependent editing activities. One activity is designated as 'pretransfer' editing and involves the hydrolysis of activated Val-AMP. The other activity is designated 'posttransfer' editing and involves deacylation of mischarged Val-tRNA(Ile). The protein is Isoleucine--tRNA ligase of Thermoplasma volcanium (strain ATCC 51530 / DSM 4299 / JCM 9571 / NBRC 15438 / GSS1).